A 113-amino-acid polypeptide reads, in one-letter code: Large ribosomal subunit protein bL19 (113 aa).

Belongs to the bacterial ribosomal protein bL19 family.

Its function is as follows. This protein is located at the 30S-50S ribosomal subunit interface and may play a role in the structure and function of the aminoacyl-tRNA binding site. The polypeptide is Large ribosomal subunit protein bL19 (Corynebacterium diphtheriae (strain ATCC 700971 / NCTC 13129 / Biotype gravis)).